A 376-amino-acid chain; its full sequence is Lipid-A-disaccharide synthase (376 aa).

Belongs to the LpxB family.

The catalysed reaction is a lipid X + a UDP-2-N,3-O-bis[(3R)-3-hydroxyacyl]-alpha-D-glucosamine = a lipid A disaccharide + UDP + H(+). It participates in bacterial outer membrane biogenesis; LPS lipid A biosynthesis. Its function is as follows. Condensation of UDP-2,3-diacylglucosamine and 2,3-diacylglucosamine-1-phosphate to form lipid A disaccharide, a precursor of lipid A, a phosphorylated glycolipid that anchors the lipopolysaccharide to the outer membrane of the cell. The polypeptide is Lipid-A-disaccharide synthase (Coxiella burnetii (strain Dugway 5J108-111)).